We begin with the raw amino-acid sequence, 503 residues long: UDP-N-acetylmuramoylalanine--D-glutamate ligase (503 aa).

ATP is bound at residue 129 to 135 (GTNGKTT).

Belongs to the MurCDEF family.

The protein resides in the cytoplasm. The catalysed reaction is UDP-N-acetyl-alpha-D-muramoyl-L-alanine + D-glutamate + ATP = UDP-N-acetyl-alpha-D-muramoyl-L-alanyl-D-glutamate + ADP + phosphate + H(+). Its pathway is cell wall biogenesis; peptidoglycan biosynthesis. In terms of biological role, cell wall formation. Catalyzes the addition of glutamate to the nucleotide precursor UDP-N-acetylmuramoyl-L-alanine (UMA). This chain is UDP-N-acetylmuramoylalanine--D-glutamate ligase, found in Burkholderia cenocepacia (strain HI2424).